The primary structure comprises 349 residues: Peroxisomal acyl-coenzyme A thioester hydrolase 1 (349 aa).

Residues aspartate 259, serine 282, and glutamine 333 each act as charge relay system in the active site. The Microbody targeting signal motif lies at 347-349; the sequence is AKF.

It belongs to the C/M/P thioester hydrolase family.

The protein resides in the peroxisome. It carries out the reaction hexadecanoyl-CoA + H2O = hexadecanoate + CoA + H(+). Functionally, acyl-coenzyme A (acyl-CoA) thioesterases are a group of enzymes that catalyze the hydrolysis of acyl-CoAs to the free fatty acid and coenzyme A (CoASH), providing the potential to regulate intracellular levels of acyl-CoAs, free fatty acids and CoASH. Contributes to growth on fatty acids. The protein is Peroxisomal acyl-coenzyme A thioester hydrolase 1 (TES1) of Saccharomyces cerevisiae (strain ATCC 204508 / S288c) (Baker's yeast).